We begin with the raw amino-acid sequence, 77 residues long: Conotoxin Ar5.1 b (77 aa).

Positions 1–19 are cleaved as a signal peptide; the sequence is MLCLPVFIILLLLASPAAS. A propeptide spanning residues 20 to 44 is cleaved from the precursor; the sequence is NPLKTRIQSDLIRAALEDADMKNEK.

It belongs to the conotoxin T superfamily. In terms of processing, contains 2 disulfide bonds that can be either 'C1-C3, C2-C4' or 'C1-C4, C2-C3', since these disulfide connectivities have been observed for conotoxins with cysteine framework V (for examples, see AC P0DQQ7 and AC P81755). In terms of tissue distribution, expressed by the venom duct.

It is found in the secreted. The polypeptide is Conotoxin Ar5.1 b (Conus arenatus (Sand-dusted cone)).